Reading from the N-terminus, the 141-residue chain is Hemoglobin subunit alpha-D (141 aa).

One can recognise a Globin domain in the interval 1–141; the sequence is MLNHDEKQLI…VSAVLAEKYR (141 aa). Residues His58 and His87 each coordinate heme b.

Belongs to the globin family. As to quaternary structure, heterotetramer of two alpha-D chains and two beta chains. In terms of tissue distribution, red blood cells.

In terms of biological role, involved in oxygen transport from the lung to the various peripheral tissues. The protein is Hemoglobin subunit alpha-D (HBAD) of Chrysemys picta bellii (Western painted turtle).